Reading from the N-terminus, the 553-residue chain is HTH-type transcriptional regulator SgrR (553 aa).

The 113-residue stretch at methionine 1 to arginine 113 folds into the HTH marR-type domain. A DNA-binding region (H-T-H motif) is located at residues leucine 26–histidine 49. Positions glutamate 163 to tryptophan 494 are solute-binding.

Functionally, activates the small RNA gene sgrS under glucose-phosphate stress conditions as well as yfdZ. Represses its own transcription under both stress and non-stress conditions. Might act as a sensor of the intracellular accumulation of phosphoglucose by binding these molecules in its C-terminal solute-binding domain. This is HTH-type transcriptional regulator SgrR from Yersinia pestis bv. Antiqua (strain Antiqua).